The primary structure comprises 145 residues: Actin-depolymerizing factor 2 (145 aa).

Residues 13 to 145 enclose the ADF-H domain; the sequence is GMGVAPDIRD…DLEVLRERAH (133 aa).

The protein belongs to the actin-binding proteins ADF family.

Actin-depolymerizing protein. Severs actin filaments (F-actin) and binds to actin monomers. This is Actin-depolymerizing factor 2 (ADF2) from Oryza sativa subsp. japonica (Rice).